A 435-amino-acid chain; its full sequence is Serine--tRNA ligase (435 aa).

An L-serine-binding site is contributed by 234–236; it reads TAE. 265-267 is an ATP binding site; the sequence is RRE. E288 serves as a coordination point for L-serine. An ATP-binding site is contributed by 352–355; the sequence is EISS. S388 serves as a coordination point for L-serine.

It belongs to the class-II aminoacyl-tRNA synthetase family. Type-1 seryl-tRNA synthetase subfamily. Homodimer. The tRNA molecule binds across the dimer.

Its subcellular location is the cytoplasm. The catalysed reaction is tRNA(Ser) + L-serine + ATP = L-seryl-tRNA(Ser) + AMP + diphosphate + H(+). The enzyme catalyses tRNA(Sec) + L-serine + ATP = L-seryl-tRNA(Sec) + AMP + diphosphate + H(+). It functions in the pathway aminoacyl-tRNA biosynthesis; selenocysteinyl-tRNA(Sec) biosynthesis; L-seryl-tRNA(Sec) from L-serine and tRNA(Sec): step 1/1. Its function is as follows. Catalyzes the attachment of serine to tRNA(Ser). Is also able to aminoacylate tRNA(Sec) with serine, to form the misacylated tRNA L-seryl-tRNA(Sec), which will be further converted into selenocysteinyl-tRNA(Sec). The chain is Serine--tRNA ligase from Synechococcus sp. (strain JA-2-3B'a(2-13)) (Cyanobacteria bacterium Yellowstone B-Prime).